We begin with the raw amino-acid sequence, 207 residues long: Large ribosomal subunit protein bL25 (207 aa).

Belongs to the bacterial ribosomal protein bL25 family. CTC subfamily. As to quaternary structure, part of the 50S ribosomal subunit; part of the 5S rRNA/L5/L18/L25 subcomplex. Contacts the 5S rRNA. Binds to the 5S rRNA independently of L5 and L18.

This is one of the proteins that binds to the 5S RNA in the ribosome where it forms part of the central protuberance. In Brucella abortus (strain S19), this protein is Large ribosomal subunit protein bL25.